A 252-amino-acid polypeptide reads, in one-letter code: Probable transcriptional regulatory protein A1C_04175 (252 aa).

Belongs to the TACO1 family.

The protein localises to the cytoplasm. This chain is Probable transcriptional regulatory protein A1C_04175, found in Rickettsia akari (strain Hartford).